Reading from the N-terminus, the 294-residue chain is Acetaldehyde dehydrogenase (294 aa).

Position 11–14 (11–14 (SGNI)) interacts with NAD(+). Catalysis depends on C126, which acts as the Acyl-thioester intermediate. NAD(+)-binding positions include 157–165 (SAGPGTRAN) and N269.

This sequence belongs to the acetaldehyde dehydrogenase family.

It catalyses the reaction acetaldehyde + NAD(+) + CoA = acetyl-CoA + NADH + H(+). This is Acetaldehyde dehydrogenase (pheF) from Geobacillus stearothermophilus (Bacillus stearothermophilus).